Consider the following 557-residue polypeptide: Carbamoyl phosphate synthase large chain, N-terminal section (557 aa).

The tract at residues 1–402 (MPKRTDIKKI…ALLKAVRSLE (402 aa)) is carboxyphosphate synthetic domain. Arginine 129, arginine 169, glycine 175, glycine 176, lysine 208, leucine 210, glutamate 215, glycine 241, valine 242, histidine 243, glutamine 285, and glutamate 299 together coordinate ATP. The region spanning 133 to 328 (KETMESIGLK…IAKVAAKLAV (196 aa)) is the ATP-grasp domain. 3 residues coordinate Mg(2+): glutamine 285, glutamate 299, and asparagine 301. Mn(2+) is bound by residues glutamine 285, glutamate 299, and asparagine 301. Positions 403–553 (LDRYGLAFPK…PYYTVDGQEI (151 aa)) are oligomerization domain.

Belongs to the CarB family. Composed of two chains; the small (or glutamine) chain promotes the hydrolysis of glutamine to ammonia, which is used by the large (or ammonia) chain to synthesize carbamoyl phosphate. Tetramer of heterodimers (alpha,beta)4. Mg(2+) serves as cofactor. Requires Mn(2+) as cofactor.

The catalysed reaction is hydrogencarbonate + L-glutamine + 2 ATP + H2O = carbamoyl phosphate + L-glutamate + 2 ADP + phosphate + 2 H(+). It catalyses the reaction hydrogencarbonate + NH4(+) + 2 ATP = carbamoyl phosphate + 2 ADP + phosphate + 2 H(+). It functions in the pathway amino-acid biosynthesis; L-arginine biosynthesis; carbamoyl phosphate from bicarbonate: step 1/1. It participates in pyrimidine metabolism; UMP biosynthesis via de novo pathway; (S)-dihydroorotate from bicarbonate: step 1/3. Its function is as follows. Large subunit of the glutamine-dependent carbamoyl phosphate synthetase (CPSase). CPSase catalyzes the formation of carbamoyl phosphate from the ammonia moiety of glutamine, carbonate, and phosphate donated by ATP, constituting the first step of 2 biosynthetic pathways, one leading to arginine and/or urea and the other to pyrimidine nucleotides. The large subunit (synthetase) binds the substrates ammonia (free or transferred from glutamine from the small subunit), hydrogencarbonate and ATP and carries out an ATP-coupled ligase reaction, activating hydrogencarbonate by forming carboxy phosphate which reacts with ammonia to form carbamoyl phosphate. In Aquifex aeolicus (strain VF5), this protein is Carbamoyl phosphate synthase large chain, N-terminal section (carB1).